A 301-amino-acid polypeptide reads, in one-letter code: 2-oxo-3-(phosphooxy)propyl 3-oxoalkanoate synthase (301 aa).

This sequence belongs to the AfsA family.

It catalyses the reaction a medium-chain 3-oxoacyl-[ACP] + dihydroxyacetone phosphate = a (4-alkanoyl-5-oxo-2,5-dihydrofuran-3-yl)methyl phosphate + holo-[ACP] + H2O. Involved in the biosynthesis of A factor (2-isocapryloyl-3R-hydroxymethyl-gamma-butyrolactone), a gamma-butyrolactone autoregulator that triggers secondary metabolism and morphogenesis in Streptomyces. Catalyzes beta-ketoacyl transfer from 8-methyl-3-oxononanoyl-acyl carrier protein (ACP) to the hydroxyl group of dihydroxyacetone phosphate (DHAP), thus producing an 8-methyl-3-oxononanoyl-DHAP ester. The polypeptide is 2-oxo-3-(phosphooxy)propyl 3-oxoalkanoate synthase (Streptomyces griseus).